The sequence spans 166 residues: Regulator of ribonuclease activity A (166 aa).

This sequence belongs to the RraA family. In terms of assembly, homotrimer. Binds to both RNA-binding sites in the C-terminal region of Rne and to RhlB.

It localises to the cytoplasm. Globally modulates RNA abundance by binding to RNase E (Rne) and regulating its endonucleolytic activity. Can modulate Rne action in a substrate-dependent manner by altering the composition of the degradosome. Modulates RNA-binding and helicase activities of the degradosome. This chain is Regulator of ribonuclease activity A, found in Glaesserella parasuis serovar 5 (strain SH0165) (Haemophilus parasuis).